The chain runs to 244 residues: Na(+)-translocating NADH-quinone reductase subunit E (244 aa).

Transmembrane regions (helical) follow at residues 11-31, 50-70, 90-110, 123-143, 153-173, and 191-211; these read LLGI…TFLG, MSVA…HYFI, FLEL…LELL, GIFL…LFGI, VVFS…FATI, and ISFI…GIDI.

The protein belongs to the NqrDE/RnfAE family. In terms of assembly, composed of six subunits; NqrA, NqrB, NqrC, NqrD, NqrE and NqrF.

It is found in the cell inner membrane. The enzyme catalyses a ubiquinone + n Na(+)(in) + NADH + H(+) = a ubiquinol + n Na(+)(out) + NAD(+). Its function is as follows. NQR complex catalyzes the reduction of ubiquinone-1 to ubiquinol by two successive reactions, coupled with the transport of Na(+) ions from the cytoplasm to the periplasm. NqrA to NqrE are probably involved in the second step, the conversion of ubisemiquinone to ubiquinol. This Chlamydia trachomatis serovar L2 (strain ATCC VR-902B / DSM 19102 / 434/Bu) protein is Na(+)-translocating NADH-quinone reductase subunit E.